The following is a 414-amino-acid chain: Eukaryotic initiation factor 4A-3 (414 aa).

Alanine 2 carries the post-translational modification N-acetylalanine. A Q motif motif is present at residues 41-69 (DSFDAMELQPDLLRGIYAYGFEKPSAIQQ). The 171-residue stretch at 72-242 (IIPFCKGLDV…RKFMNKPVRI (171 aa)) folds into the Helicase ATP-binding domain. 85–92 (AQSGTGKT) contacts ATP. Serine 106 carries the phosphoserine modification. A Phosphothreonine modification is found at threonine 147. A DEAD box motif is present at residues 190–193 (DEAD). One can recognise a Helicase C-terminal domain in the interval 253–414 (GIKQFYVNVD…ELPSNVADLL (162 aa)).

The protein belongs to the DEAD box helicase family. eIF4A subfamily. EIF4F is a multi-subunit complex, the composition of which varies with external and internal environmental conditions. It is composed of at least EIF4A, EIF4E and EIF4G.

It is found in the cytoplasm. The enzyme catalyses ATP + H2O = ADP + phosphate + H(+). Its function is as follows. ATP-dependent RNA helicase which is a subunit of the eIF4F complex involved in cap recognition and is required for mRNA binding to ribosome. In the current model of translation initiation, eIF4A unwinds RNA secondary structures in the 5'-UTR of mRNAs which is necessary to allow efficient binding of the small ribosomal subunit, and subsequent scanning for the initiator codon. The protein is Eukaryotic initiation factor 4A-3 (TIF4A-3) of Arabidopsis thaliana (Mouse-ear cress).